We begin with the raw amino-acid sequence, 170 residues long: Urease accessory protein UreE (170 aa).

A disordered region spans residues 134–170 (ESGAYGGGHHHHGDDGHHPLAPIPLRQKIHRPSDKAE).

The protein belongs to the UreE family.

It is found in the cytoplasm. Its function is as follows. Involved in urease metallocenter assembly. Binds nickel. Probably functions as a nickel donor during metallocenter assembly. This chain is Urease accessory protein UreE, found in Janthinobacterium sp. (strain Marseille) (Minibacterium massiliensis).